A 504-amino-acid polypeptide reads, in one-letter code: Putative arrestin-related trafficking adapter SPBC839.02 (504 aa).

The segment at 481–504 (QAPPPKYDDIFQSGSSHDENHDDN) is disordered.

This sequence belongs to the ALY1 family.

In terms of biological role, may regulate endocytosis in response to extracellular stimuli. This chain is Putative arrestin-related trafficking adapter SPBC839.02, found in Schizosaccharomyces pombe (strain 972 / ATCC 24843) (Fission yeast).